The sequence spans 73 residues: Translational regulator CsrA (73 aa).

Residues 54–73 (ENRAASDSPWSPNSLPQLPV) form a disordered region. The segment covering 61–73 (SPWSPNSLPQLPV) has biased composition (polar residues).

Belongs to the CsrA/RsmA family. Homodimer; the beta-strands of each monomer intercalate to form a hydrophobic core, while the alpha-helices form wings that extend away from the core.

The protein localises to the cytoplasm. In terms of biological role, a translational regulator that binds mRNA to regulate translation initiation and/or mRNA stability. Usually binds in the 5'-UTR at or near the Shine-Dalgarno sequence preventing ribosome-binding, thus repressing translation. Its main target seems to be the major flagellin gene, while its function is anatagonized by FliW. The sequence is that of Translational regulator CsrA from Treponema pallidum (strain Nichols).